Here is a 137-residue protein sequence, read N- to C-terminus: Putative pumilio homolog 25 (137 aa).

Pumilio repeat units follow at residues 70 to 105 (EFDS…LPHS) and 108 to 137 (SVLV…TRLA).

It localises to the cytoplasm. In terms of biological role, sequence-specific RNA-binding protein that regulates translation and mRNA stability by binding the 3'-UTR of target mRNAs. The chain is Putative pumilio homolog 25 (APUM25) from Arabidopsis thaliana (Mouse-ear cress).